A 325-amino-acid chain; its full sequence is Elongation factor P--(R)-beta-lysine ligase (325 aa).

76-78 (SPE) is a substrate binding site. Residues 100-102 (RNE) and N109 each bind ATP. Y118 provides a ligand contact to substrate. 244–245 (EL) lines the ATP pocket. A substrate-binding site is contributed by E251. Residue G300 participates in ATP binding.

The protein belongs to the class-II aminoacyl-tRNA synthetase family. EpmA subfamily. As to quaternary structure, homodimer.

The catalysed reaction is D-beta-lysine + L-lysyl-[protein] + ATP = N(6)-((3R)-3,6-diaminohexanoyl)-L-lysyl-[protein] + AMP + diphosphate + H(+). In terms of biological role, with EpmB is involved in the beta-lysylation step of the post-translational modification of translation elongation factor P (EF-P). Catalyzes the ATP-dependent activation of (R)-beta-lysine produced by EpmB, forming a lysyl-adenylate, from which the beta-lysyl moiety is then transferred to the epsilon-amino group of a conserved specific lysine residue in EF-P. In Pectobacterium carotovorum subsp. carotovorum (strain PC1), this protein is Elongation factor P--(R)-beta-lysine ligase.